We begin with the raw amino-acid sequence, 3159 residues long: E1A-binding protein p400 (3159 aa).

Residues 1–16 (MHHGTGPQNVQHQLQR) show a composition bias toward polar residues. 7 disordered regions span residues 1 to 65 (MHHG…MNRS), 125 to 154 (SPLSQQVQTQSPTQPSPGPGQALQNVRAGA), 212 to 261 (PGTP…HITT), 282 to 359 (VLQG…PASP), 545 to 594 (LMPT…PQLP), 633 to 658 (QQPNVPIPAPPSSQLPIPPSQPAQLA), and 684 to 770 (TRLP…SQDT). Positions 31–41 (HPNPPPSPAAP) are enriched in pro residues. Low complexity predominate over residues 42–55 (FAPSASPSAPQSPS). A Phosphoserine modification is found at Ser53. Over residues 56–65 (YQIQQLMNRS) the composition is skewed to polar residues. Composition is skewed to low complexity over residues 125–137 (SPLSQQVQTQSPT) and 237–256 (LGPQSPAAAGGAGLQPLASP). Ser135 bears the Phosphoserine mark. Ser315 and Ser321 each carry phosphoserine. Over residues 558 to 571 (QAAQLAGQRQSQQQ) the composition is skewed to low complexity. Positions 572 to 585 (YDPSTGPPVQNAAS) are enriched in polar residues. Composition is skewed to pro residues over residues 637–653 (VPIPAPPSSQLPIPPSQ) and 689–698 (DPAPPCPRPL). Residues 699–711 (PTSSTSSLAPVSG) show a composition bias toward low complexity. Composition is skewed to polar residues over residues 725 to 742 (NRPSSATNKALSPVTSRT) and 751 to 760 (TKPQSPAQNA). Phosphoserine occurs at positions 736 and 755. A compositionally biased stretch (low complexity) spans 761–770 (TSSQDSSQDT). The HSA domain maps to 799-871 (LPKLQEAPRP…EQSRLRRIAA (73 aa)). Disordered regions lie at residues 915–967 (ELRP…GVVD) and 997–1024 (SSQWPRPKPDGEDTSGEEDADDCPGDRE). 2 positions are modified to phosphoserine: Ser928 and Ser941. Thr945 carries the post-translational modification Phosphothreonine. Composition is skewed to acidic residues over residues 945-962 (TDDEVDDEEETIEEEEAN) and 1008-1019 (EDTSGEEDADDC). Residues 951-1365 (DEEETIEEEE…NVLSILVRLQ (415 aa)) form an interactions with RUVBL1 and RUVBL2 region. Residue Ser1011 is modified to Phosphoserine. In terms of domain architecture, Helicase ATP-binding spans 1103 to 1268 (AKLYRKNLNG…WTMVHFLVPG (166 aa)). Position 1116 to 1123 (1116 to 1123 (DEAGLGKT)) interacts with ATP. The DEAH box-like signature appears at 1219-1222 (DEMQ). The interval 1467–1582 (VQYGQKPEGR…QAPSHAAGQS (116 aa)) is disordered. Position 1472 is an N6-acetyllysine (Lys1472). 2 stretches are compositionally biased toward low complexity: residues 1481–1498 (PSTHPPRTAAPTTASAAP) and 1538–1565 (PASASSTAASPAHPAKLRAQTTAQASTP). Residues Ser1547, Ser1728, and Ser1732 each carry the phosphoserine modification. The tract at residues 1787–1807 (GSLDGRRGKEAGPAHSYTSSS) is disordered. Basic and acidic residues predominate over residues 1789 to 1798 (LDGRRGKEAG). The Helicase C-terminal domain maps to 1899–2056 (KLEALAILLQ…GNDYSMAFLT (158 aa)). Disordered stretches follow at residues 2119–2144 (KSAQEGVLGPHTDALSSDSENMPCDE) and 2287–2311 (KERKRHKTDPSAAGRKKKQRHGEAV). N6-acetyllysine occurs at positions 2349 and 2356. Residues 2360-2429 (EPGQDNPEWL…QCRNRYENVI (70 aa)) form the Myb-like domain. Disordered stretches follow at residues 2524–2602 (KEKK…AQPA) and 2665–2688 (TPGGSAPAQVVHTQPPPRAVGSPA). The segment at 2524–2789 (KEKKALADQQ…QQQQQTTTTS (266 aa)) is interaction with ZNF42. Positions 2530-2540 (ADQQKAQQPAV) are enriched in low complexity. Composition is skewed to pro residues over residues 2541–2563 (AQPPPPQPQPPPPPQQPPPPLPQ) and 2572–2589 (PAGPPAVQPQPQPQPQTQ). The span at 2590–2602 (PQPVQAPAKAQPA) shows a compositional bias: low complexity. Ser2686 carries the phosphoserine modification. Thr2813 is modified (phosphothreonine). Disordered regions lie at residues 2821 to 2869 (QKQK…TAPR) and 3115 to 3159 (APLQ…PPCQ). Pro residues predominate over residues 2828–2843 (PPQPPPPQAQSAPPQP). Low complexity predominate over residues 2844-2866 (TAQVQVQTSQPPQQQSPQLTTVT). Over residues 3129–3140 (PASSDSPSQQPK) the composition is skewed to polar residues.

The protein belongs to the SNF2/RAD54 helicase family. SWR1 subfamily. Component of the NuA4 histone acetyltransferase complex which contains the catalytic subunit KAT5/TIP60 and the subunits EP400, TRRAP/PAF400, BRD8/SMAP, EPC1, DMAP1/DNMAP1, RUVBL1/TIP49, RUVBL2, ING3, actin, ACTL6A/BAF53A, MORF4L1/MRG15, MORF4L2/MRGX, MRGBP, YEATS4/GAS41, VPS72/YL1 and MEAF6. May also participate in the formation of NuA4 related complexes which lack the KAT5/TIP60 catalytic subunit, but which include the SWI/SNF related protein SRCAP. The NuA4 complex interacts with MYC and the adenovirus E1A protein. EP400 interacts with TRRAP, RUVBL1 and RUVBL2. Component of a SWR1-like complex. Interacts with ZNF42. Interacts with PHF5A. Interacts with human cytomegalovirus UL27. Interacts with human adenovirus 5 E1A protein; this interaction stabilizes MYC. Ubiquitously expressed.

The protein resides in the nucleus. Component of the NuA4 histone acetyltransferase complex which is involved in transcriptional activation of select genes principally by acetylation of nucleosomal histones H4 and H2A. This modification may both alter nucleosome - DNA interactions and promote interaction of the modified histones with other proteins which positively regulate transcription. May be required for transcriptional activation of E2F1 and MYC target genes during cellular proliferation. The NuA4 complex ATPase and helicase activities seem to be, at least in part, contributed by the association of RUVBL1 and RUVBL2 with EP400. May regulate ZNF42 transcription activity. Component of a SWR1-like complex that specifically mediates the removal of histone H2A.Z/H2AZ1 from the nucleosome. This is E1A-binding protein p400 (EP400) from Homo sapiens (Human).